A 34-amino-acid chain; its full sequence is MEVNILAFIATALFILIPTSFLLIIYVKTVSQNN.

The chain crosses the membrane as a helical span at residues 5-25 (ILAFIATALFILIPTSFLLII).

The protein belongs to the PsbM family. PSII is composed of 1 copy each of membrane proteins PsbA, PsbB, PsbC, PsbD, PsbE, PsbF, PsbH, PsbI, PsbJ, PsbK, PsbL, PsbM, PsbT, PsbX, PsbY, PsbZ, Psb30/Ycf12, at least 3 peripheral proteins of the oxygen-evolving complex and a large number of cofactors. It forms dimeric complexes. Detected in both etioplasts and green leaves; PSII is only assembled in green leaves.

The protein localises to the plastid. It is found in the chloroplast thylakoid membrane. Functionally, one of the components of the core complex of photosystem II (PSII). PSII is a light-driven water:plastoquinone oxidoreductase that uses light energy to abstract electrons from H(2)O, generating O(2) and a proton gradient subsequently used for ATP formation. It consists of a core antenna complex that captures photons, and an electron transfer chain that converts photonic excitation into a charge separation. This subunit is found at the monomer-monomer interface. The sequence is that of Photosystem II reaction center protein M from Hordeum vulgare (Barley).